The primary structure comprises 1044 residues: Isoleucine--tRNA ligase (1044 aa).

The short motif at 48–58 (PFATGLPHFGH) is the 'HIGH' region element. Positions 594-598 (KMSKS) match the 'KMSKS' region motif. Position 597 (Lys597) interacts with ATP.

It belongs to the class-I aminoacyl-tRNA synthetase family. IleS type 2 subfamily. In terms of assembly, monomer. Requires Zn(2+) as cofactor.

It localises to the cytoplasm. The enzyme catalyses tRNA(Ile) + L-isoleucine + ATP = L-isoleucyl-tRNA(Ile) + AMP + diphosphate. In terms of biological role, catalyzes the attachment of isoleucine to tRNA(Ile). As IleRS can inadvertently accommodate and process structurally similar amino acids such as valine, to avoid such errors it has two additional distinct tRNA(Ile)-dependent editing activities. One activity is designated as 'pretransfer' editing and involves the hydrolysis of activated Val-AMP. The other activity is designated 'posttransfer' editing and involves deacylation of mischarged Val-tRNA(Ile). In Borrelia turicatae (strain 91E135), this protein is Isoleucine--tRNA ligase.